The sequence spans 1485 residues: ABC multidrug transporter I (1485 aa).

Disordered regions lie at residues methionine 1–serine 57 and lysine 75–glycine 111. A compositionally biased stretch (polar residues) spans serine 8–alanine 24. Residue asparagine 12 is glycosylated (N-linked (GlcNAc...) asparagine). A compositionally biased stretch (basic and acidic residues) spans glycine 85–serine 95. Residues asparagine 132, asparagine 335, and asparagine 451 are each glycosylated (N-linked (GlcNAc...) asparagine). The ABC transporter 1 domain occupies methionine 163–proline 411. The next 7 membrane-spanning stretches (helical) occupy residues phenylalanine 522 to tryptophan 542, glycine 556 to serine 576, isoleucine 600 to isoleucine 620, phenylalanine 623 to leucine 643, tyrosine 664 to isoleucine 684, glutamate 691 to valine 711, and phenylalanine 774 to threonine 794. The 244-residue stretch at phenylalanine 846–alanine 1089 folds into the ABC transporter 2 domain. Residue glycine 882–threonine 889 coordinates ATP. The next 5 membrane-spanning stretches (helical) occupy residues tyrosine 1184–leucine 1204, alanine 1211–leucine 1231, leucine 1268–phenylalanine 1288, phenylalanine 1299–leucine 1319, and isoleucine 1325–isoleucine 1345. N-linked (GlcNAc...) asparagine glycosylation is found at asparagine 1396 and asparagine 1418. A helical transmembrane segment spans residues leucine 1449–phenylalanine 1469.

It belongs to the ABC transporter superfamily. ABCG family. PDR (TC 3.A.1.205) subfamily.

It localises to the cell membrane. It carries out the reaction fluconazole(in) + ATP + H2O = fluconazole(out) + ADP + phosphate + H(+). With respect to regulation, the efflux inhibitor FK506 does not impair the transport activity. Its function is as follows. ABC efflux transporter that confers resistance to fluconazole (FLC) but shows no resistance to other azoles. Is also able to transport rhodamine 6G (R-6G), a known substrate for many ABC transporters. This is ABC multidrug transporter I from Aspergillus fumigatus (strain ATCC MYA-4609 / CBS 101355 / FGSC A1100 / Af293) (Neosartorya fumigata).